We begin with the raw amino-acid sequence, 473 residues long: Probable ribonuclease FAU-1 (473 aa).

Belongs to the FAU-1 family.

In terms of biological role, probable RNase involved in rRNA stability through maturation and/or degradation of precursor rRNAs. Binds to RNA in loop regions with AU-rich sequences. This Hyperthermus butylicus (strain DSM 5456 / JCM 9403 / PLM1-5) protein is Probable ribonuclease FAU-1.